A 164-amino-acid polypeptide reads, in one-letter code: Transcription antitermination protein NusB (164 aa).

The tract at residues 144–164 (KNGRGLIDHTPPRAAKTDAKS) is disordered. The segment covering 149–164 (LIDHTPPRAAKTDAKS) has biased composition (basic and acidic residues).

This sequence belongs to the NusB family.

Functionally, involved in transcription antitermination. Required for transcription of ribosomal RNA (rRNA) genes. Binds specifically to the boxA antiterminator sequence of the ribosomal RNA (rrn) operons. In Chlorobium phaeovibrioides (strain DSM 265 / 1930) (Prosthecochloris vibrioformis (strain DSM 265)), this protein is Transcription antitermination protein NusB.